The sequence spans 78 residues: Small ribosomal subunit protein bS21A (78 aa).

Residues 30-52 (MKARSAYEKPSEKRAREKGEAVR) show a composition bias toward basic and acidic residues. The interval 30–78 (MKARSAYEKPSEKRAREKGEAVRRQRKLARKKLQREGLLPAPKKAVRAR) is disordered. Residues 53-62 (RQRKLARKKL) show a composition bias toward basic residues.

Belongs to the bacterial ribosomal protein bS21 family.

In Rhizobium etli (strain ATCC 51251 / DSM 11541 / JCM 21823 / NBRC 15573 / CFN 42), this protein is Small ribosomal subunit protein bS21A.